Here is a 149-residue protein sequence, read N- to C-terminus: Nucleoside diphosphate kinase (149 aa).

Residues Lys9, Phe57, Arg85, Thr91, Arg102, and Asn112 each contribute to the ATP site. The active-site Pros-phosphohistidine intermediate is His115.

This sequence belongs to the NDK family. Homotetramer. Mg(2+) is required as a cofactor.

The protein resides in the cytoplasm. The enzyme catalyses a 2'-deoxyribonucleoside 5'-diphosphate + ATP = a 2'-deoxyribonucleoside 5'-triphosphate + ADP. It carries out the reaction a ribonucleoside 5'-diphosphate + ATP = a ribonucleoside 5'-triphosphate + ADP. In terms of biological role, major role in the synthesis of nucleoside triphosphates other than ATP. The ATP gamma phosphate is transferred to the NDP beta phosphate via a ping-pong mechanism, using a phosphorylated active-site intermediate. The polypeptide is Nucleoside diphosphate kinase (Carboxydothermus hydrogenoformans (strain ATCC BAA-161 / DSM 6008 / Z-2901)).